The chain runs to 571 residues: Proline--tRNA ligase (571 aa).

This sequence belongs to the class-II aminoacyl-tRNA synthetase family. ProS type 1 subfamily. Homodimer.

It localises to the cytoplasm. The catalysed reaction is tRNA(Pro) + L-proline + ATP = L-prolyl-tRNA(Pro) + AMP + diphosphate. In terms of biological role, catalyzes the attachment of proline to tRNA(Pro) in a two-step reaction: proline is first activated by ATP to form Pro-AMP and then transferred to the acceptor end of tRNA(Pro). As ProRS can inadvertently accommodate and process non-cognate amino acids such as alanine and cysteine, to avoid such errors it has two additional distinct editing activities against alanine. One activity is designated as 'pretransfer' editing and involves the tRNA(Pro)-independent hydrolysis of activated Ala-AMP. The other activity is designated 'posttransfer' editing and involves deacylation of mischarged Ala-tRNA(Pro). The misacylated Cys-tRNA(Pro) is not edited by ProRS. This is Proline--tRNA ligase from Actinobacillus pleuropneumoniae serotype 7 (strain AP76).